The chain runs to 872 residues: UPF0182 protein Noc_0961 (872 aa).

Helical transmembrane passes span 8 to 28 (FLIL…AGFE), 56 to 76 (LVVF…NFWV), 109 to 129 (SLWI…WPLF), 159 to 179 (LFSF…FLLL), 207 to 227 (WHLS…FFLQ), 254 to 274 (PFIW…LLFI), and 282 to 302 (TLAV…FHFL).

It belongs to the UPF0182 family.

It localises to the cell membrane. The chain is UPF0182 protein Noc_0961 from Nitrosococcus oceani (strain ATCC 19707 / BCRC 17464 / JCM 30415 / NCIMB 11848 / C-107).